The following is a 368-amino-acid chain: Cytochrome P450 119 (368 aa).

Heme-binding residues include histidine 76, arginine 80, threonine 257, arginine 259, histidine 315, and cysteine 317.

This sequence belongs to the cytochrome P450 family. Heme serves as cofactor.

The protein resides in the cytoplasm. It carries out the reaction 2 a phenolic donor + H2O2 = 2 a phenolic radical donor + 2 H2O. Functionally, the endogenous substrate is not known. In vitro, catalyzes the H(2)O(2)-dependent epoxidation of styrene, cis-beta-methylstyrene, and cis-stilbene with retention of stereochemistry. Is able to use cumene hydroperoxide (CHP) or tert-butyl hydroperoxide (TBHP) instead of H(2)O(2) as the electron acceptor. Can also hydroxylate fatty acids such as lauric acid. This is Cytochrome P450 119 (cyp119) from Sulfolobus acidocaldarius (strain ATCC 33909 / DSM 639 / JCM 8929 / NBRC 15157 / NCIMB 11770).